A 130-amino-acid polypeptide reads, in one-letter code: DNA-directed RNA polymerase subunit omega (130 aa).

Disordered regions lie at residues 79-98 (EPES…VDAD) and 108-130 (TEEE…EEDE).

It belongs to the RNA polymerase subunit omega family. The RNAP catalytic core consists of 2 alpha, 1 beta, 1 beta' and 1 omega subunit. When a sigma factor is associated with the core the holoenzyme is formed, which can initiate transcription.

The catalysed reaction is RNA(n) + a ribonucleoside 5'-triphosphate = RNA(n+1) + diphosphate. In terms of biological role, promotes RNA polymerase assembly. Latches the N- and C-terminal regions of the beta' subunit thereby facilitating its interaction with the beta and alpha subunits. The sequence is that of DNA-directed RNA polymerase subunit omega from Nitrobacter winogradskyi (strain ATCC 25391 / DSM 10237 / CIP 104748 / NCIMB 11846 / Nb-255).